The sequence spans 878 residues: Phosphoenolpyruvate carboxylase (878 aa).

Catalysis depends on residues His-140 and Lys-545.

The protein belongs to the PEPCase type 1 family. Mg(2+) is required as a cofactor.

It carries out the reaction oxaloacetate + phosphate = phosphoenolpyruvate + hydrogencarbonate. Its function is as follows. Forms oxaloacetate, a four-carbon dicarboxylic acid source for the tricarboxylic acid cycle. The chain is Phosphoenolpyruvate carboxylase from Pseudomonas aeruginosa (strain ATCC 15692 / DSM 22644 / CIP 104116 / JCM 14847 / LMG 12228 / 1C / PRS 101 / PAO1).